We begin with the raw amino-acid sequence, 346 residues long: Biotin synthase (346 aa).

The Radical SAM core domain occupies 38–256 (RQVQVSTLLS…IAVARIMMPT (219 aa)). [4Fe-4S] cluster contacts are provided by cysteine 53, cysteine 57, and cysteine 60. [2Fe-2S] cluster contacts are provided by cysteine 97, cysteine 128, cysteine 188, and arginine 260.

It belongs to the radical SAM superfamily. Biotin synthase family. In terms of assembly, homodimer. The cofactor is [4Fe-4S] cluster. [2Fe-2S] cluster is required as a cofactor.

The catalysed reaction is (4R,5S)-dethiobiotin + (sulfur carrier)-SH + 2 reduced [2Fe-2S]-[ferredoxin] + 2 S-adenosyl-L-methionine = (sulfur carrier)-H + biotin + 2 5'-deoxyadenosine + 2 L-methionine + 2 oxidized [2Fe-2S]-[ferredoxin]. The protein operates within cofactor biosynthesis; biotin biosynthesis; biotin from 7,8-diaminononanoate: step 2/2. Catalyzes the conversion of dethiobiotin (DTB) to biotin by the insertion of a sulfur atom into dethiobiotin via a radical-based mechanism. The sequence is that of Biotin synthase from Escherichia coli O6:H1 (strain CFT073 / ATCC 700928 / UPEC).